Reading from the N-terminus, the 240-residue chain is uncharacterized protein (240 aa).

To H.influenzae HI_0575.

This is an uncharacterized protein from Escherichia coli (strain K12).